Here is a 158-residue protein sequence, read N- to C-terminus: UPF0262 protein R00612 (158 aa).

The protein belongs to the UPF0262 family.

The polypeptide is UPF0262 protein R00612 (Rhizobium meliloti (strain 1021) (Ensifer meliloti)).